The sequence spans 304 residues: Glutaminase (304 aa).

The substrate site is built by Ser63, Asn114, Glu158, Asn165, Tyr189, Tyr240, and Val258.

It belongs to the glutaminase family. Homotetramer.

It carries out the reaction L-glutamine + H2O = L-glutamate + NH4(+). This Shewanella amazonensis (strain ATCC BAA-1098 / SB2B) protein is Glutaminase.